Consider the following 289-residue polypeptide: ATP synthase subunit a (289 aa).

The next 6 helical transmembrane spans lie at 43–63, 104–124, 160–180, 193–213, 232–252, and 259–279; these read AFHVDTLGWSVLLGVVFLFIF, IAPLALTVFVWIFLLNLIDLV, ISVFALIVFYSIKVKGIGGFL, IVVQILLIPVNFLLEFVTLIA, IFILIAVMFGSGMFLLSALGV, and AVFHILIITLQAFIFMMLTIV.

The protein belongs to the ATPase A chain family. As to quaternary structure, F-type ATPases have 2 components, CF(1) - the catalytic core - and CF(0) - the membrane proton channel. CF(1) has five subunits: alpha(3), beta(3), gamma(1), delta(1), epsilon(1). CF(0) has three main subunits: a(1), b(2) and c(9-12). The alpha and beta chains form an alternating ring which encloses part of the gamma chain. CF(1) is attached to CF(0) by a central stalk formed by the gamma and epsilon chains, while a peripheral stalk is formed by the delta and b chains.

The protein resides in the cell inner membrane. Functionally, key component of the proton channel; it plays a direct role in the translocation of protons across the membrane. The chain is ATP synthase subunit a from Pseudomonas paraeruginosa (strain DSM 24068 / PA7) (Pseudomonas aeruginosa (strain PA7)).